Consider the following 320-residue polypeptide: Cytochrome f (320 aa).

The first 35 residues, 1-35 (MQNRNTFSWVKEQMTRSISVSIIIYVITRTSISNA), serve as a signal peptide directing secretion. 4 residues coordinate heme: tyrosine 36, cysteine 56, cysteine 59, and histidine 60. A helical membrane pass occupies residues 286–306 (VQGLLFFLASIILAQIFLVLK).

It belongs to the cytochrome f family. The 4 large subunits of the cytochrome b6-f complex are cytochrome b6, subunit IV (17 kDa polypeptide, petD), cytochrome f and the Rieske protein, while the 4 small subunits are PetG, PetL, PetM and PetN. The complex functions as a dimer. It depends on heme as a cofactor.

It localises to the plastid. It is found in the chloroplast thylakoid membrane. In terms of biological role, component of the cytochrome b6-f complex, which mediates electron transfer between photosystem II (PSII) and photosystem I (PSI), cyclic electron flow around PSI, and state transitions. This Chloranthus spicatus (Chulantree) protein is Cytochrome f.